The chain runs to 233 residues: Glutathione S-transferase U15 (233 aa).

One can recognise a GST N-terminal domain in the interval 5-85 (EEVKLLGTWY…YIDETWNSSG (81 aa)). Glutathione is bound by residues 15–16 (SP), 42–43 (SK), 56–57 (KV), and 69–70 (VS). A GST C-terminal domain is found at 92–219 (HPYDRALARF…VPDIDKVAKF (128 aa)). At Thr-158 the chain carries Phosphothreonine.

This sequence belongs to the GST superfamily. Tau family.

Its subcellular location is the cytoplasm. It localises to the cytosol. It catalyses the reaction RX + glutathione = an S-substituted glutathione + a halide anion + H(+). May be involved in the conjugation of reduced glutathione to a wide number of exogenous and endogenous hydrophobic electrophiles and have a detoxification role against certain herbicides. The chain is Glutathione S-transferase U15 (GSTU15) from Arabidopsis thaliana (Mouse-ear cress).